Here is a 352-residue protein sequence, read N- to C-terminus: Galactokinase (352 aa).

17–20 (EHTD) contacts substrate. Residues Ser49 and 101–107 (GAGLSSS) each bind ATP. Residues Ser107 and Glu139 each contribute to the Mg(2+) site. Asp151 acts as the Proton acceptor in catalysis. A substrate-binding site is contributed by Tyr200.

The protein belongs to the GHMP kinase family. GalK subfamily. Monomer.

The protein resides in the cytoplasm. The catalysed reaction is alpha-D-galactose + ATP = alpha-D-galactose 1-phosphate + ADP + H(+). It functions in the pathway carbohydrate metabolism; galactose metabolism. Functionally, catalyzes the transfer of the gamma-phosphate of ATP to D-galactose to form alpha-D-galactose-1-phosphate (Gal-1-P). Is very specific for its substrate, since it is not able to use D-glucose, D-fructose, D-mannose, 2-deoxy-D-glucose, and D-glucosamine as substrates. The sequence is that of Galactokinase from Pyrococcus furiosus (strain ATCC 43587 / DSM 3638 / JCM 8422 / Vc1).